The chain runs to 310 residues: Quinolinate synthase (310 aa).

Positions 27 and 44 each coordinate iminosuccinate. [4Fe-4S] cluster is bound at residue cysteine 89. Residues 115 to 117 (YVN) and serine 132 each bind iminosuccinate. Residue cysteine 175 coordinates [4Fe-4S] cluster. Iminosuccinate-binding positions include 201 to 203 (HPE) and threonine 222. Cysteine 267 serves as a coordination point for [4Fe-4S] cluster.

Belongs to the quinolinate synthase family. Type 2 subfamily. It depends on [4Fe-4S] cluster as a cofactor.

The protein localises to the cytoplasm. The catalysed reaction is iminosuccinate + dihydroxyacetone phosphate = quinolinate + phosphate + 2 H2O + H(+). The protein operates within cofactor biosynthesis; NAD(+) biosynthesis; quinolinate from iminoaspartate: step 1/1. Functionally, catalyzes the condensation of iminoaspartate with dihydroxyacetone phosphate to form quinolinate. The polypeptide is Quinolinate synthase (Thermus thermophilus (strain ATCC BAA-163 / DSM 7039 / HB27)).